Reading from the N-terminus, the 446-residue chain is Argininosuccinate synthase (446 aa).

ATP contacts are provided by residues 17–25 and Ala-43; that span reads AFSGGLDTS. Tyr-99 lines the L-citrulline pocket. ATP is bound by residues Gly-129 and Thr-131. L-aspartate is bound by residues Thr-131, Asn-135, and Asp-136. Residue Asn-135 participates in L-citrulline binding. Position 136 (Asp-136) interacts with ATP. 2 residues coordinate L-citrulline: Arg-139 and Ser-192. Position 194 (Asp-194) interacts with ATP. 3 residues coordinate L-citrulline: Thr-201, Glu-203, and Glu-280.

It belongs to the argininosuccinate synthase family. Type 2 subfamily. In terms of assembly, homotetramer.

The protein localises to the cytoplasm. It catalyses the reaction L-citrulline + L-aspartate + ATP = 2-(N(omega)-L-arginino)succinate + AMP + diphosphate + H(+). It participates in amino-acid biosynthesis; L-arginine biosynthesis; L-arginine from L-ornithine and carbamoyl phosphate: step 2/3. In Burkholderia mallei (strain NCTC 10247), this protein is Argininosuccinate synthase.